Reading from the N-terminus, the 550-residue chain is Hydroxylamine reductase (550 aa).

Positions 3, 6, 18, and 25 each coordinate [2Fe-2S] cluster. Positions 249, 273, 317, 405, 433, 458, 492, and 494 each coordinate hybrid [4Fe-2O-2S] cluster. Cys405 is subject to Cysteine persulfide.

It belongs to the HCP family. [2Fe-2S] cluster is required as a cofactor. Requires hybrid [4Fe-2O-2S] cluster as cofactor.

The protein resides in the cytoplasm. The catalysed reaction is A + NH4(+) + H2O = hydroxylamine + AH2 + H(+). In terms of biological role, catalyzes the reduction of hydroxylamine to form NH(3) and H(2)O. This chain is Hydroxylamine reductase, found in Proteus mirabilis (strain HI4320).